The chain runs to 181 residues: Oligoribonuclease (181 aa).

An Exonuclease domain is found at 8 to 171 (LIWIDLEMTG…DDIRESVAEL (164 aa)). Residue tyrosine 129 is part of the active site.

Belongs to the oligoribonuclease family.

The protein resides in the cytoplasm. Functionally, 3'-to-5' exoribonuclease specific for small oligoribonucleotides. The sequence is that of Oligoribonuclease from Photorhabdus laumondii subsp. laumondii (strain DSM 15139 / CIP 105565 / TT01) (Photorhabdus luminescens subsp. laumondii).